Here is a 78-residue protein sequence, read N- to C-terminus: Large ribosomal subunit protein bL28 (78 aa).

It belongs to the bacterial ribosomal protein bL28 family.

In Leifsonia xyli subsp. xyli (strain CTCB07), this protein is Large ribosomal subunit protein bL28.